We begin with the raw amino-acid sequence, 382 residues long: Galactokinase (382 aa).

34-37 (EHTD) is a binding site for substrate. 124–130 (GAGLSSS) is a binding site for ATP. Residues Ser-130 and Glu-162 each contribute to the Mg(2+) site. Asp-174 (proton acceptor) is an active-site residue. Residue Tyr-223 participates in substrate binding.

This sequence belongs to the GHMP kinase family. GalK subfamily.

It localises to the cytoplasm. The catalysed reaction is alpha-D-galactose + ATP = alpha-D-galactose 1-phosphate + ADP + H(+). The protein operates within carbohydrate metabolism; galactose metabolism. Its function is as follows. Catalyzes the transfer of the gamma-phosphate of ATP to D-galactose to form alpha-D-galactose-1-phosphate (Gal-1-P). The protein is Galactokinase of Cronobacter sakazakii (strain ATCC BAA-894) (Enterobacter sakazakii).